The chain runs to 109 residues: Large ribosomal subunit protein eL30 (109 aa).

This sequence belongs to the eukaryotic ribosomal protein eL30 family.

In Methanopyrus kandleri (strain AV19 / DSM 6324 / JCM 9639 / NBRC 100938), this protein is Large ribosomal subunit protein eL30.